Reading from the N-terminus, the 341-residue chain is NADH-ubiquinone oxidoreductase chain 2 (341 aa).

10 consecutive transmembrane segments (helical) span residues 8-28 (ILFT…NSWL), 61-81 (FLTQ…LMLA), 95-115 (MIIM…FWFP), 121-141 (LTWM…LMLI), 146-166 (IKNL…IGGL), 174-194 (LMAF…MISE), 195-215 (SIWL…TFMF), 238-258 (FSLF…GFLP), 273-293 (FLLT…LRIC), and 321-341 (LIMT…FFML).

Belongs to the complex I subunit 2 family.

The protein localises to the mitochondrion inner membrane. The catalysed reaction is a ubiquinone + NADH + 5 H(+)(in) = a ubiquinol + NAD(+) + 4 H(+)(out). Functionally, core subunit of the mitochondrial membrane respiratory chain NADH dehydrogenase (Complex I) that is believed to belong to the minimal assembly required for catalysis. Complex I functions in the transfer of electrons from NADH to the respiratory chain. The immediate electron acceptor for the enzyme is believed to be ubiquinone. The protein is NADH-ubiquinone oxidoreductase chain 2 (mt:ND2) of Drosophila yakuba (Fruit fly).